Here is a 552-residue protein sequence, read N- to C-terminus: MALEDRCSPQSAPSPITLQMQHLHHQQQQQQQQQQQMQHLHQLQQLQQLHQQQLAAGVFHHPAMAFDAAAAAAAAAAAAAAHAHAAALQQRLSGSGSPASCSTPASSTPLTIKEEESDSVIGDMSFHNQTHTTNEEEEAEEDDDIDVDVDDTSAGGRLPPPAHQQQSTAKPSLAFSISNILSDRFGDVQKPGKSMENQASIFRPFEASRSQTATPSAFTRVDLLEFSRQQQAAAAAATAAMMLERANFLNCFNPAAYPRIHEEIVQSRLRRSAANAVIPPPMSSKMSDANPEKSALGSLCKAVSQIGQPAAPTMTQPPLSSSASSLASPPPASNASTISSTSSVATSSSSSSSGCSSAASSLNSSPSSRLGASGSGVNASSPQPQPIPPPSAVSRDSGMESSDDTRSETGSTTTEGGKNEMWPAWVYCTRYSDRPSSGPRYRRPKQPKDKTNDEKRPRTAFSSEQLARLKREFNENRYLTERRRQQLSSELGLNEAQIKIWFQNKRAKIKKSTGSKNPLALQLMAQGLYNHTTVPLTKEEEELEMRMNGQIP.

Low complexity predominate over residues 93-108 (SGSGSPASCSTPASST). 4 disordered regions span residues 93–112 (SGSGSPASCSTPASSTPLTI), 130–171 (THTT…TAKP), 309–419 (PAAP…GGKN), and 433–460 (DRPSSGPRYRRPKQPKDKTNDEKRPRTA). Residues 135 to 151 (EEEEAEEDDDIDVDVDD) show a composition bias toward acidic residues. Residues 317–382 (PPLSSSASSL…SGSGVNASSP (66 aa)) show a composition bias toward low complexity. Residues 446–457 (QPKDKTNDEKRP) are compositionally biased toward basic and acidic residues. Positions 454–513 (EKRPRTAFSSEQLARLKREFNENRYLTERRRQQLSSELGLNEAQIKIWFQNKRAKIKKST) form a DNA-binding region, homeobox.

Belongs to the engrailed homeobox family. In terms of processing, phosphorylated. Phosphorylation may directly or allosterically modify its function.

It localises to the nucleus. Functionally, this protein specifies the body segmentation pattern. It is required for the development of the central nervous system. Transcriptional regulator that represses activated promoters. Wg signaling operates by inactivating the SGG repression of EN autoactivation. This is Segmentation polarity homeobox protein engrailed (en) from Drosophila melanogaster (Fruit fly).